Here is a 130-residue protein sequence, read N- to C-terminus: Large ribosomal subunit protein bL20c (130 aa).

Belongs to the bacterial ribosomal protein bL20 family.

It is found in the plastid. The protein localises to the chloroplast. In terms of biological role, binds directly to 23S ribosomal RNA and is necessary for the in vitro assembly process of the 50S ribosomal subunit. It is not involved in the protein synthesizing functions of that subunit. This is Large ribosomal subunit protein bL20c from Oenothera argillicola (Appalachian evening primrose).